Here is a 242-residue protein sequence, read N- to C-terminus: Tryptophan synthase alpha chain (242 aa).

Catalysis depends on proton acceptor residues Glu-31 and Asp-42.

It belongs to the TrpA family. As to quaternary structure, tetramer of two alpha and two beta chains.

It catalyses the reaction (1S,2R)-1-C-(indol-3-yl)glycerol 3-phosphate + L-serine = D-glyceraldehyde 3-phosphate + L-tryptophan + H2O. Its pathway is amino-acid biosynthesis; L-tryptophan biosynthesis; L-tryptophan from chorismate: step 5/5. Its function is as follows. The alpha subunit is responsible for the aldol cleavage of indoleglycerol phosphate to indole and glyceraldehyde 3-phosphate. The chain is Tryptophan synthase alpha chain from Staphylococcus aureus (strain MRSA252).